The chain runs to 389 residues: Chalcone synthase H2 (389 aa).

Cys-164 is a catalytic residue.

Belongs to the thiolase-like superfamily. Chalcone/stilbene synthases family.

Its subcellular location is the cytoplasm. It catalyses the reaction (E)-4-coumaroyl-CoA + 3 malonyl-CoA + 3 H(+) = 2',4,4',6'-tetrahydroxychalcone + 3 CO2 + 4 CoA. It participates in secondary metabolite biosynthesis; flavonoid biosynthesis. Involved in the biosynthesis of prenylated phenolics natural products which contribute to the bitter taste of beer and display broad biological activities. Chalcone synthase that can use 4-coumaroyl-CoA to produce 4,2',4',6'-tetrahydroxychalcone (also termed naringenin-chalcone or chalcone) which can, under specific conditions, spontaneously isomerize into naringenin. In Humulus lupulus (European hop), this protein is Chalcone synthase H2.